A 380-amino-acid polypeptide reads, in one-letter code: Chaperone protein DnaJ (380 aa).

The region spanning 5–69 (DYYEILGVSK…QKRAHYDQFG (65 aa)) is the J domain. A CR-type zinc finger spans residues 135–217 (GKETDIEIPS…CGGTGRVKRR (83 aa)). Residues C148, C151, C165, C168, C191, C194, C205, and C208 each coordinate Zn(2+). CXXCXGXG motif repeat units lie at residues 148–155 (CNTCHGTG), 165–172 (CPHCHGAG), 191–198 (CPYCGGTG), and 205–212 (CTTCGGTG).

It belongs to the DnaJ family. In terms of assembly, homodimer. The cofactor is Zn(2+).

It is found in the cytoplasm. Its function is as follows. Participates actively in the response to hyperosmotic and heat shock by preventing the aggregation of stress-denatured proteins and by disaggregating proteins, also in an autonomous, DnaK-independent fashion. Unfolded proteins bind initially to DnaJ; upon interaction with the DnaJ-bound protein, DnaK hydrolyzes its bound ATP, resulting in the formation of a stable complex. GrpE releases ADP from DnaK; ATP binding to DnaK triggers the release of the substrate protein, thus completing the reaction cycle. Several rounds of ATP-dependent interactions between DnaJ, DnaK and GrpE are required for fully efficient folding. Also involved, together with DnaK and GrpE, in the DNA replication of plasmids through activation of initiation proteins. The chain is Chaperone protein DnaJ from Geobacillus stearothermophilus (Bacillus stearothermophilus).